The following is a 363-amino-acid chain: Probable butyrate kinase (363 aa).

Belongs to the acetokinase family.

The protein resides in the cytoplasm. The enzyme catalyses butanoate + ATP = butanoyl phosphate + ADP. This is Probable butyrate kinase from Maridesulfovibrio salexigens (strain ATCC 14822 / DSM 2638 / NCIMB 8403 / VKM B-1763) (Desulfovibrio salexigens).